The chain runs to 535 residues: Probable fucosyltransferase 4 (535 aa).

Topologically, residues 1–20 are cytoplasmic; the sequence is MYHIFQISGEVIKGLGLKTK. The chain crosses the membrane as a helical; Signal-anchor for type II membrane protein span at residues 21 to 41; it reads ILITIVFSTLLILSVMLLSFS. At 42 to 535 the chain is on the lumenal side; the sequence is NNFNNKLFAA…IWGLKLFDEL (494 aa). N-linked (GlcNAc...) asparagine glycans are attached at residues Asn-136, Asn-226, Asn-230, Asn-377, and Asn-409.

The protein belongs to the glycosyltransferase 37 family. Expressed in roots, stems, leaves, flowers, siliques and seedlings.

It is found in the golgi apparatus. Its subcellular location is the golgi stack membrane. Its pathway is protein modification; protein glycosylation. In terms of biological role, may be involved in cell wall biosynthesis. May act as a fucosyltransferase. In Arabidopsis thaliana (Mouse-ear cress), this protein is Probable fucosyltransferase 4 (FUT4).